The following is a 442-amino-acid chain: Septin-8 (442 aa).

Ala2 carries the post-translational modification N-acetylalanine. Ser10 carries the phosphoserine modification. A Septin-type G domain is found at Gln41 to Glu307. A G1 motif region spans residues Gly51–Ser58. GTP contacts are provided by residues Gly51–Ser58, Gly106, Lys187–Glu195, Gly241, and Arg256. Residues Asp103 to Gly106 form a G3 motif region. Positions Ala186–Asp189 are G4 motif. The stretch at Leu322 to Ser410 forms a coiled coil. Positions His377–Leu391 are enriched in basic and acidic residues. The tract at residues His377–Pro442 is disordered. Polar residues-rich tracts occupy residues Leu408–Pro420 and Gly432–Pro442.

Belongs to the TRAFAC class TrmE-Era-EngA-EngB-Septin-like GTPase superfamily. Septin GTPase family. As to quaternary structure, septins polymerize into heterooligomeric protein complexes that form filaments, and can associate with cellular membranes, actin filaments and microtubules. GTPase activity is required for filament formation. Interacts with CDK14, SEPTIN4, SEPTIN5 and SEPTIN7. Interacts with VAMP2; the interaction inhibits interaction of VAMP2 with SYP. Interacts with STX1A.

The protein resides in the cytoplasm. The protein localises to the cytoskeleton. It localises to the synapse. Its subcellular location is the cell projection. It is found in the axon. The protein resides in the cytoplasmic vesicle. The protein localises to the secretory vesicle. It localises to the synaptic vesicle membrane. Its subcellular location is the presynapse. Its function is as follows. Filament-forming cytoskeletal GTPase. May play a role in platelet secretion. Seems to participate in the process of SNARE complex formation in synaptic vesicles. The protein is Septin-8 of Callithrix jacchus (White-tufted-ear marmoset).